A 251-amino-acid polypeptide reads, in one-letter code: Blue-light absorbing proteorhodopsin (251 aa).

The signal sequence occupies residues 1-18 (MGKLLLILGSAIALPSFA). 7 helical membrane passes run 30–50 (VGVS…FFFV), 65–85 (VSGL…GVWI), 97–117 (IDWL…LAAC), 120–140 (VAAS…GAGF), 144–164 (AGLA…LYMI), 190–210 (MMMI…AGYL), and 223–243 (LIYN…IWNV). Position 233 is an N6-(retinylidene)lysine (Lys-233).

The protein belongs to the archaeal/bacterial/fungal opsin family. In terms of processing, contains one covalently linked retinal chromophore.

The protein localises to the cell membrane. In terms of biological role, light-driven proton pump. May have a regulatory rather than energy harvesting function, based on light-induced opening of proton channels, to modulate cell physiology depending on light intensity variations. Could be, therefore, a sensory rhodopsin, potentially associated with a transducer component. The sequence is that of Blue-light absorbing proteorhodopsin from Gamma-proteobacterium Hot 75m4.